The primary structure comprises 283 residues: Coiled-coil domain-containing protein 42 homolog (283 aa).

2 coiled-coil regions span residues Ala31–Tyr139 and Gln174–Ser204.

Belongs to the CFAP73 family.

In Monosiga brevicollis (Choanoflagellate), this protein is Coiled-coil domain-containing protein 42 homolog.